Reading from the N-terminus, the 154-residue chain is UPF0225 protein YPTB2098 (154 aa).

This sequence belongs to the UPF0225 family.

The protein is UPF0225 protein YPTB2098 of Yersinia pseudotuberculosis serotype I (strain IP32953).